A 393-amino-acid polypeptide reads, in one-letter code: Trehalose import ATP-binding protein SugC (393 aa).

Positions 4–235 (IVLDHVNKSY…PANLFVAGFI (232 aa)) constitute an ABC transporter domain. Residue 37–44 (GPSGCGKT) coordinates ATP. Positions 135–139 (LSGGQ) match the Helical C-loop; LSGGQ motif motif.

It belongs to the ABC transporter superfamily. As to quaternary structure, monomer. Homodimerizes in the presence of ATP. The complex is composed of two ATP-binding proteins (SugC), two transmembrane proteins (SugA and SugB) and a solute-binding protein (LpqY).

The protein localises to the cell inner membrane. It catalyses the reaction alpha,alpha-trehalose(out) + ATP + H2O = alpha,alpha-trehalose(in) + ADP + phosphate + H(+). In terms of biological role, part of the ABC transporter complex LpqY-SugA-SugB-SugC, which is highly specific for uptake of trehalose. Involved in the recycling of extracellular trehalose released from trehalose-containing molecules synthesized by M.tuberculosis. Trehalose uptake is essential for virulence. Responsible for energy coupling to the transport system. The polypeptide is Trehalose import ATP-binding protein SugC (sugC) (Mycobacterium tuberculosis (strain CDC 1551 / Oshkosh)).